We begin with the raw amino-acid sequence, 420 residues long: Glucose-1-phosphate adenylyltransferase (420 aa).

Alpha-D-glucose 1-phosphate-binding positions include Tyr-107, Gly-173, 188–189 (EK), and Ser-206.

This sequence belongs to the bacterial/plant glucose-1-phosphate adenylyltransferase family. Homotetramer.

The catalysed reaction is alpha-D-glucose 1-phosphate + ATP + H(+) = ADP-alpha-D-glucose + diphosphate. Its pathway is glycan biosynthesis; glycogen biosynthesis. Its function is as follows. Involved in the biosynthesis of ADP-glucose, a building block required for the elongation reactions to produce glycogen. Catalyzes the reaction between ATP and alpha-D-glucose 1-phosphate (G1P) to produce pyrophosphate and ADP-Glc. This chain is Glucose-1-phosphate adenylyltransferase, found in Shewanella oneidensis (strain ATCC 700550 / JCM 31522 / CIP 106686 / LMG 19005 / NCIMB 14063 / MR-1).